A 163-amino-acid chain; its full sequence is Nucleotide-binding protein YajQ (163 aa).

Belongs to the YajQ family.

Nucleotide-binding protein. This is Nucleotide-binding protein YajQ from Salmonella typhi.